A 677-amino-acid chain; its full sequence is Methionine--tRNA ligase (677 aa).

A 'HIGH' region motif is present at residues 15 to 25 (PYANGSIHLGH). Cys146, Cys149, Cys159, and Cys162 together coordinate Zn(2+). A 'KMSKS' region motif is present at residues 333–337 (KMSKS). An ATP-binding site is contributed by Lys336. The tRNA-binding domain maps to 575 to 677 (DFAKVDLRVA…AGAKPGHQVK (103 aa)).

Belongs to the class-I aminoacyl-tRNA synthetase family. MetG type 1 subfamily. Homodimer. Zn(2+) is required as a cofactor.

It localises to the cytoplasm. It catalyses the reaction tRNA(Met) + L-methionine + ATP = L-methionyl-tRNA(Met) + AMP + diphosphate. Is required not only for elongation of protein synthesis but also for the initiation of all mRNA translation through initiator tRNA(fMet) aminoacylation. The chain is Methionine--tRNA ligase from Shigella dysenteriae serotype 1 (strain Sd197).